We begin with the raw amino-acid sequence, 273 residues long: MDQLQSTIEEAFERRAEMTPRNVEAKLKESITQVLEMLDSGKLRVAEKTDGEWKTHQWIKKAVLLSFRIEDNSFIKGGFSNYFDKVPSKFADYSSRDFRNGGFRVVPPATVRKGAFIASNVVLMPSYVNIGAYVDEGTMVDTWATVGSCAQIGKNVHLSGGVGIGGVLEPVQANPTIIEDNCFIGARSEVVEGVIVGENSVISMGVYIGQSTRIYNRETGEISYGRIPPGSVVVSGSLPSADGKYSLYCAVIVKQVDAKTRAKTGINELLRGI.

Residues arginine 104 and aspartate 141 each contribute to the substrate site.

This sequence belongs to the transferase hexapeptide repeat family. In terms of assembly, homotrimer.

The protein localises to the cytoplasm. The catalysed reaction is (S)-2,3,4,5-tetrahydrodipicolinate + succinyl-CoA + H2O = (S)-2-succinylamino-6-oxoheptanedioate + CoA. It functions in the pathway amino-acid biosynthesis; L-lysine biosynthesis via DAP pathway; LL-2,6-diaminopimelate from (S)-tetrahydrodipicolinate (succinylase route): step 1/3. The sequence is that of 2,3,4,5-tetrahydropyridine-2,6-dicarboxylate N-succinyltransferase from Nitrosospira multiformis (strain ATCC 25196 / NCIMB 11849 / C 71).